A 36-amino-acid chain; its full sequence is MLCCSASVKFSNGLQLSLLICACLLAVLIVSFCRRR.

The helical transmembrane segment at 13-33 threads the bilayer; it reads GLQLSLLICACLLAVLIVSFC.

The protein resides in the host membrane. This is Protein P4 from Vitis vinifera (Grape).